A 264-amino-acid polypeptide reads, in one-letter code: S-adenosylmethionine decarboxylase proenzyme (264 aa).

Ser-112 functions as the Schiff-base intermediate with substrate; via pyruvic acid in the catalytic mechanism. Position 112 is a pyruvic acid (Ser); by autocatalysis (Ser-112). Catalysis depends on His-117, which acts as the Proton acceptor; for processing activity. The active-site Proton donor; for catalytic activity is Cys-140.

Belongs to the prokaryotic AdoMetDC family. Type 2 subfamily. Heterooctamer of four alpha and four beta chains arranged as a tetramer of alpha/beta heterodimers. It depends on pyruvate as a cofactor. Post-translationally, is synthesized initially as an inactive proenzyme. Formation of the active enzyme involves a self-maturation process in which the active site pyruvoyl group is generated from an internal serine residue via an autocatalytic post-translational modification. Two non-identical subunits are generated from the proenzyme in this reaction, and the pyruvate is formed at the N-terminus of the alpha chain, which is derived from the carboxyl end of the proenzyme. The post-translation cleavage follows an unusual pathway, termed non-hydrolytic serinolysis, in which the side chain hydroxyl group of the serine supplies its oxygen atom to form the C-terminus of the beta chain, while the remainder of the serine residue undergoes an oxidative deamination to produce ammonia and the pyruvoyl group blocking the N-terminus of the alpha chain.

It carries out the reaction S-adenosyl-L-methionine + H(+) = S-adenosyl 3-(methylsulfanyl)propylamine + CO2. Its pathway is amine and polyamine biosynthesis; S-adenosylmethioninamine biosynthesis; S-adenosylmethioninamine from S-adenosyl-L-methionine: step 1/1. Its function is as follows. Catalyzes the decarboxylation of S-adenosylmethionine to S-adenosylmethioninamine (dcAdoMet), the propylamine donor required for the synthesis of the polyamines spermine and spermidine from the diamine putrescine. The polypeptide is S-adenosylmethionine decarboxylase proenzyme (Hamiltonella defensa subsp. Acyrthosiphon pisum (strain 5AT)).